An 835-amino-acid polypeptide reads, in one-letter code: Leucine--tRNA ligase (835 aa).

A 'HIGH' region motif is present at residues 36–46 (PYPSGKIHVGH). Residues 602–606 (KMSKS) carry the 'KMSKS' region motif. Lysine 605 is a binding site for ATP.

Belongs to the class-I aminoacyl-tRNA synthetase family.

The protein localises to the cytoplasm. It catalyses the reaction tRNA(Leu) + L-leucine + ATP = L-leucyl-tRNA(Leu) + AMP + diphosphate. The sequence is that of Leucine--tRNA ligase from Rickettsia peacockii (strain Rustic).